The following is a 714-amino-acid chain: Calpain-1 catalytic subunit (714 aa).

Residues 55 to 354 (LFRDEAFPPV…FTRLEICNLT (300 aa)) enclose the Calpain catalytic domain. Ca(2+)-binding residues include glutamine 109 and aspartate 114. Active-site residues include cysteine 115, histidine 272, and asparagine 296. Serine 316, aspartate 318, and glutamate 323 together coordinate Ca(2+). The residue at position 354 (threonine 354) is a Phosphothreonine. A domain III region spans residues 355-526 (PDALKSRTIR…KSAGTAELDD (172 aa)). The interval 527–542 (QIQANLPDEQVLSEEE) is linker. 4 EF-hand domains span residues 541–576 (EEIDENFKALFRQLAGEDMEISVKELRTILNRIISK), 585–618 (FSLESCRSMVNLMDRDGNGKLGLVEFNILWNRIR), 615–650 (NRIRNYLSIFRKFDLDKSGSMSAYEMRMAIESAGFK), and 680–714 (VRLETMFRFFKTLDTDLDGVVTFDLFKWLQLTMFA). The interval 543 to 713 (IDENFKALFR…LFKWLQLTMF (171 aa)) is domain IV. 10 residues coordinate Ca(2+): aspartate 598, aspartate 600, asparagine 602, lysine 604, glutamate 609, aspartate 628, aspartate 630, serine 632, serine 634, and glutamate 639.

It belongs to the peptidase C2 family. As to quaternary structure, forms a heterodimer with a small (regulatory) subunit (CAPNS1). Ca(2+) serves as cofactor. Undergoes calcium-induced successive autoproteolytic cleavages that generate a membrane-bound 78 kDa active form and an intracellular 75 kDa active form. Calpastatin reduces with high efficiency the transition from 78 kDa to 75 kDa calpain forms. In terms of tissue distribution, ubiquitous.

It is found in the cytoplasm. The protein localises to the cell membrane. The catalysed reaction is Broad endopeptidase specificity.. Activated by micromolar concentrations of calcium and inhibited by calpastatin. Calcium-regulated non-lysosomal thiol-protease which catalyze limited proteolysis of substrates involved in cytoskeletal remodeling and signal transduction. Proteolytically cleaves CTBP1. Cleaves and activates caspase-7 (CASP7). This is Calpain-1 catalytic subunit (CAPN1) from Macaca fascicularis (Crab-eating macaque).